A 314-amino-acid chain; its full sequence is Pyridoxal 5'-phosphate synthase-like subunit PDX1.2 (314 aa).

Alanine 2 carries the N-acetylalanine modification.

It belongs to the PdxS/SNZ family. As to quaternary structure, homodimer or heterodimer with PDX1.1 or PDX1.3. No interaction with PDX2. Expressed in callus tissues, flowers and roots. Weakly expressed in leaves and stems.

Its subcellular location is the cytoplasm. The protein has no function in the formation of pyridoxal 5'-phosphate. This Arabidopsis thaliana (Mouse-ear cress) protein is Pyridoxal 5'-phosphate synthase-like subunit PDX1.2 (PDX12).